The primary structure comprises 345 residues: Small ribosomal subunit protein mS45 (345 aa).

A mitochondrion-targeting transit peptide spans 1–27; sequence MSYGLTGTSSKLRGTSSIFSWTQVRHF.

The protein belongs to the mitochondrion-specific ribosomal protein mS45 family. In terms of assembly, component of the mitochondrial small ribosomal subunit (mt-SSU). Mature yeast 74S mitochondrial ribosomes consist of a small (37S) and a large (54S) subunit. The 37S small subunit contains a 15S ribosomal RNA (15S mt-rRNA) and 34 different proteins. The 54S large subunit contains a 21S rRNA (21S mt-rRNA) and 46 different proteins.

It localises to the mitochondrion. Functionally, component of the mitochondrial ribosome (mitoribosome), a dedicated translation machinery responsible for the synthesis of mitochondrial genome-encoded proteins, including at least some of the essential transmembrane subunits of the mitochondrial respiratory chain. The mitoribosomes are attached to the mitochondrial inner membrane and translation products are cotranslationally integrated into the membrane. In Saccharomyces cerevisiae (strain ATCC 204508 / S288c) (Baker's yeast), this protein is Small ribosomal subunit protein mS45 (MRPS35).